The following is a 1420-amino-acid chain: Apolipoprotein(a) (1420 aa).

Positions 19-30 (TAVAPPNVTPVP) are enriched in low complexity. Positions 19–46 (TAVAPPNVTPVPSLEAPSEQAPTEQRPG) are disordered. Kringle domains are found at residues 49 to 127 (ECYH…LTQC), 163 to 241 (ECYH…LTQC), 277 to 355 (ECYH…LTQC), 391 to 469 (ECYH…LTRC), and 505 to 583 (ECYY…LTQC). 15 cysteine pairs are disulfide-bonded: Cys50–Cys127, Cys71–Cys110, Cys99–Cys122, Cys164–Cys241, Cys185–Cys224, Cys213–Cys236, Cys278–Cys355, Cys299–Cys338, Cys327–Cys350, Cys392–Cys469, Cys413–Cys452, Cys441–Cys464, Cys506–Cys583, Cys527–Cys566, and Cys555–Cys578. The tract at residues 598-617 (PDPSTQASSEEAPTEQSPEV) is disordered. Residues 600–616 (PSTQASSEEAPTEQSPE) are compositionally biased toward polar residues. Kringle domains follow at residues 619–697 (DCYH…LTQC), 725–803 (DCYH…LTQC), 839–917 (DCYQ…LTQC), 953–1031 (DCYH…LTQC), and 1067–1145 (QCYH…LTRC). Cystine bridges form between Cys620/Cys697, Cys641/Cys680, Cys669/Cys692, Cys726/Cys803, Cys747/Cys786, Cys775/Cys798, Cys840/Cys917, Cys861/Cys900, Cys889/Cys912, Cys954/Cys1031, Cys975/Cys1014, Cys1003/Cys1026, Cys1068/Cys1145, Cys1089/Cys1128, Cys1117/Cys1140, Cys1217/Cys1233, Cys1309/Cys1376, Cys1339/Cys1355, and Cys1366/Cys1394. The Peptidase S1 domain occupies 1191–1418 (IVGGCVAHPH…FVTWIEGVMR (228 aa)).

It belongs to the peptidase S1 family. Plasminogen subfamily. In terms of assembly, disulfide-linked to apo-B100. Binds to fibronectin and decorin. N- and O-glycosylated.

Its function is as follows. Apo(a) is the main constituent of lipoprotein(a) (Lp(a)). It has serine proteinase activity and is able of autoproteolysis. Inhibits tissue-type plasminogen activator 1. Lp(a) may be a ligand for megalin/Gp 330. This is Apolipoprotein(a) (LPA) from Macaca mulatta (Rhesus macaque).